Consider the following 140-residue polypeptide: Large ribosomal subunit protein uL11 (140 aa).

The protein belongs to the universal ribosomal protein uL11 family. Part of the ribosomal stalk of the 50S ribosomal subunit. Interacts with L10 and the large rRNA to form the base of the stalk. L10 forms an elongated spine to which L12 dimers bind in a sequential fashion forming a multimeric L10(L12)X complex. One or more lysine residues are methylated.

Its function is as follows. Forms part of the ribosomal stalk which helps the ribosome interact with GTP-bound translation factors. The polypeptide is Large ribosomal subunit protein uL11 (Solidesulfovibrio magneticus (strain ATCC 700980 / DSM 13731 / RS-1) (Desulfovibrio magneticus)).